A 141-amino-acid polypeptide reads, in one-letter code: Nucleoside triphosphatase NudI (141 aa).

The Nudix hydrolase domain maps to 1 to 141 (MRQRTIVCPL…RVTLSQKGLL (141 aa)). A Nudix box motif is present at residues 38-59 (GGVEPVERIEEALRREIREELG).

The protein belongs to the Nudix hydrolase family. NudI subfamily. As to quaternary structure, monomer. It depends on Mg(2+) as a cofactor.

The catalysed reaction is a ribonucleoside 5'-triphosphate + H2O = a ribonucleoside 5'-phosphate + diphosphate + H(+). It carries out the reaction a 2'-deoxyribonucleoside 5'-triphosphate + H2O = a 2'-deoxyribonucleoside 5'-phosphate + diphosphate + H(+). It catalyses the reaction dUTP + H2O = dUMP + diphosphate + H(+). The enzyme catalyses dTTP + H2O = dTMP + diphosphate + H(+). The catalysed reaction is dCTP + H2O = dCMP + diphosphate + H(+). Functionally, catalyzes the hydrolysis of nucleoside triphosphates, with a preference for pyrimidine deoxynucleoside triphosphates (dUTP, dTTP and dCTP). This Klebsiella pneumoniae (strain 342) protein is Nucleoside triphosphatase NudI.